Consider the following 473-residue polypeptide: MRAGLGPIITLALVLEVAWASELKPTAPPIFTGRPFVVAWNVPTQECAPRHKVPLDLRAFDVEATPNEGFFNQNITTFYYDRLGLYPRFDAAGMSVHGGVPQNGSLCAHLPMLKEAVERYIQTQEPAGLAVIDWEEWRPVWVRNWQEKDVYRQSSRQLVASRHPDWPSDRIVKQAQYEFEFAARQFMLNTLRYVKAVRPQHLWGFYLFPDCYNHDYVQNWDSYTGRCPDVEVAQNDQLAWLWAENTALFPSVYLDKTLASSKHSRNFVSFRVQEALRVAHTHHANHALPVYVFTRPTYTRRLTELNQMDLISTIGESAALGSAGVIFWGDSVYASSMENCQNLKKYLTQTLVPYIVNVSWATQYCSWTQCHGHGRCVRRNPSASTFLHLSPSSFRLVPGRTPSEPQLRPEGELSEDDLSYLQMHFRCHCYLGWGGEQCQWNHKRAAGDASRAWAGAHLASLLGLVAMTLTWTL.

The signal sequence occupies residues 1–20 (MRAGLGPIITLALVLEVAWA). Intrachain disulfides connect C47/C340 and C211/C227. N-linked (GlcNAc...) asparagine glycans are attached at residues N74 and N103. Residue E135 is the Proton donor of the active site. N357 carries an N-linked (GlcNAc...) asparagine glycan. Positions 361–439 (ATQYCSWTQC…YLGWGGEQCQ (79 aa)) constitute an EGF-like domain. Cystine bridges form between C365–C376, C370–C427, and C429–C438. D448 carries the GPI-anchor amidated aspartate lipid modification. A propeptide spans 449–473 (ASRAWAGAHLASLLGLVAMTLTWTL) (removed in mature form).

Belongs to the glycosyl hydrolase 56 family. In terms of assembly, interacts with MST1R.

The protein resides in the cell membrane. It carries out the reaction Random hydrolysis of (1-&gt;4)-linkages between N-acetyl-beta-D-glucosamine and D-glucuronate residues in hyaluronate.. In terms of biological role, catalyzes hyaluronan degradation into small fragments that are endocytosed and degraded in lysosomes by HYAL1 and exoglycosidases. Essential for the breakdown of extracellular matrix hyaluronan. The sequence is that of Hyaluronidase-2 (Hyal2) from Rattus norvegicus (Rat).